Consider the following 577-residue polypeptide: Nuclear receptor subfamily 4 group A member 1 (577 aa).

The nuclear receptor DNA-binding region spans 243–318 (EGRCAVCGDN…VGMVKEVVRT (76 aa)). NR C4-type zinc fingers lie at residues 246–266 (CAVC…CEGC) and 282–311 (CLAN…VVGM). The segment at 247–333 (AVCGDNASCQ…RRGRLPSKPK (87 aa)) is required for binding NBRE-containing DNA. In terms of domain architecture, NR LBD spans 339–574 (SPVDLINSLV…PIVDKIFMDT (236 aa)). The may bind lipopolysaccharide stretch occupies residues 500-523 (PKKVEELQSQIINCLKEHIPSSMN). The interval 563 to 574 (PPPIVDKIFMDT) is AF-2.

This sequence belongs to the nuclear hormone receptor family. NR4 subfamily. Zn(2+) is required as a cofactor.

Its subcellular location is the nucleus. It is found in the cytoplasm. The protein localises to the cytosol. Orphan nuclear receptor. Binds the NGFI-B response element (NBRE) 5'-AAAAGGTCA-3'. Its function is as follows. In the cytosol, may detect bacterial lipopolysaccharide (LPS) and NBRE-containing mitochondrial DNA released during pyroptosis, and play a role in non-canonical inflammasome activation. The chain is Nuclear receptor subfamily 4 group A member 1 (nr4a1) from Xenopus laevis (African clawed frog).